The primary structure comprises 74 residues: RNA-binding protein Hfq (74 aa).

The Sm domain occupies 9–69 (DQFLNQLRKE…ISTFVPQKNV (61 aa)).

This sequence belongs to the Hfq family. As to quaternary structure, homohexamer.

Functionally, RNA chaperone that binds small regulatory RNA (sRNAs) and mRNAs to facilitate mRNA translational regulation in response to envelope stress, environmental stress and changes in metabolite concentrations. Also binds with high specificity to tRNAs. The chain is RNA-binding protein Hfq from Bacillus cereus (strain Q1).